A 204-amino-acid chain; its full sequence is Ras-related protein R-Ras2 (204 aa).

N-acetylalanine is present on Ala2. Residue 21–29 (GGGGVGKSA) coordinates GTP. An Effector region motif is present at residues 43 to 51 (YDPTIEDSY). Residues 68–72 (DTAGQ), 127–130 (NKAD), and 157–159 (SAK) each bind GTP. Ser186 is modified (phosphoserine). Residues Lys192, Lys194, Lys196, and Lys197 are each lipidated (N6-palmitoyl lysine). Cys199 carries the S-palmitoyl cysteine lipid modification. A Cysteine methyl ester modification is found at Cys201. Cys201 carries the S-farnesyl cysteine lipid modification. Residues 202-204 (VIF) constitute a propeptide, removed in mature form.

This sequence belongs to the small GTPase superfamily. Ras family. As to quaternary structure, interacts with RASSF5. May be post-translationally modified by both palmitoylation and polyisoprenylation. In terms of processing, fatty-acylation at Lys-192, Lys-194; lys-196 and Lys-197 is required for localization to the plasma membrane and activity. Defatty-acylated by SIRT6, affecting its localization to the plasma membrane. In terms of tissue distribution, ubiquitously present in all tissues examined, with the highest levels in heart, placenta, and skeletal muscle. Moderate levels in lung and liver; low levels in brain, kidney, and pancreas.

The protein resides in the cell membrane. Its subcellular location is the golgi apparatus membrane. It carries out the reaction GTP + H2O = GDP + phosphate + H(+). In terms of biological role, GTP-binding protein with GTPase activity, involved in the regulation of MAPK signaling pathway and thereby controlling multiple cellular processes. Regulates craniofacial development. The chain is Ras-related protein R-Ras2 from Homo sapiens (Human).